We begin with the raw amino-acid sequence, 188 residues long: GTP cyclohydrolase 1 (188 aa).

Positions 76, 79, and 148 each coordinate Zn(2+).

The protein belongs to the GTP cyclohydrolase I family. In terms of assembly, homomer.

The catalysed reaction is GTP + H2O = 7,8-dihydroneopterin 3'-triphosphate + formate + H(+). Its pathway is cofactor biosynthesis; 7,8-dihydroneopterin triphosphate biosynthesis; 7,8-dihydroneopterin triphosphate from GTP: step 1/1. The sequence is that of GTP cyclohydrolase 1 from Pelotomaculum thermopropionicum (strain DSM 13744 / JCM 10971 / SI).